Reading from the N-terminus, the 463-residue chain is Probable ECA polymerase (463 aa).

11 consecutive transmembrane segments (helical) span residues 6–26 (FGGL…LTWM), 39–59 (FSLL…VLVF), 65–85 (VVPV…YAIY), 112–132 (ANLT…IFFL), 154–174 (GVAL…VYFL), 180–200 (AWLM…VIVG), 201–221 (GTRA…IVRG), 222–242 (WITL…MFWL), 340–360 (LVVM…GLVI), 377–397 (YKAA…IVLT), and 408–428 (VVFF…LYWL).

The protein belongs to the WzyE family. As to quaternary structure, probably part of a complex composed of WzxE, WzyE and WzzE.

It is found in the cell inner membrane. The protein operates within bacterial outer membrane biogenesis; enterobacterial common antigen biosynthesis. In terms of biological role, probably involved in the polymerization of enterobacterial common antigen (ECA) trisaccharide repeat units. This is Probable ECA polymerase from Pectobacterium carotovorum subsp. carotovorum (strain PC1).